The sequence spans 127 residues: Small ribosomal subunit protein uS11 (127 aa).

This sequence belongs to the universal ribosomal protein uS11 family. In terms of assembly, part of the 30S ribosomal subunit. Interacts with proteins S7 and S18. Binds to IF-3.

In terms of biological role, located on the platform of the 30S subunit, it bridges several disparate RNA helices of the 16S rRNA. Forms part of the Shine-Dalgarno cleft in the 70S ribosome. The sequence is that of Small ribosomal subunit protein uS11 from Streptococcus pyogenes serotype M49 (strain NZ131).